Consider the following 98-residue polypeptide: NADH-ubiquinone oxidoreductase chain 4L (98 aa).

Transmembrane regions (helical) follow at residues 1-21 (MSLV…GLLM), 29-49 (SLLC…LTIL), and 61-81 (IILL…LVMV).

Belongs to the complex I subunit 4L family. In terms of assembly, core subunit of respiratory chain NADH dehydrogenase (Complex I) which is composed of 45 different subunits.

The protein resides in the mitochondrion inner membrane. The enzyme catalyses a ubiquinone + NADH + 5 H(+)(in) = a ubiquinol + NAD(+) + 4 H(+)(out). Core subunit of the mitochondrial membrane respiratory chain NADH dehydrogenase (Complex I) which catalyzes electron transfer from NADH through the respiratory chain, using ubiquinone as an electron acceptor. Part of the enzyme membrane arm which is embedded in the lipid bilayer and involved in proton translocation. This chain is NADH-ubiquinone oxidoreductase chain 4L (MT-ND4L), found in Elaphodus cephalophus (Tufted deer).